The chain runs to 277 residues: Diaminopimelate epimerase (277 aa).

Substrate is bound by residues Asn-13, Gln-46, and Asn-66. Residue Cys-75 is the Proton donor of the active site. Residues 76–77 (GN), Asn-160, Asn-193, and 211–212 (ER) each bind substrate. Cys-220 (proton acceptor) is an active-site residue. A substrate-binding site is contributed by 221-222 (GS).

Belongs to the diaminopimelate epimerase family. Homodimer.

The protein localises to the cytoplasm. It catalyses the reaction (2S,6S)-2,6-diaminopimelate = meso-2,6-diaminopimelate. It functions in the pathway amino-acid biosynthesis; L-lysine biosynthesis via DAP pathway; DL-2,6-diaminopimelate from LL-2,6-diaminopimelate: step 1/1. Functionally, catalyzes the stereoinversion of LL-2,6-diaminopimelate (L,L-DAP) to meso-diaminopimelate (meso-DAP), a precursor of L-lysine and an essential component of the bacterial peptidoglycan. The protein is Diaminopimelate epimerase of Legionella pneumophila subsp. pneumophila (strain Philadelphia 1 / ATCC 33152 / DSM 7513).